The primary structure comprises 174 residues: Alkyl hydroperoxide reductase AhpD (174 aa).

Cys130 serves as the catalytic Proton donor. Cys130 and Cys133 are disulfide-bonded. Cys133 functions as the Cysteine sulfenic acid (-SOH) intermediate in the catalytic mechanism.

The protein belongs to the AhpD family. As to quaternary structure, homotrimer.

The catalysed reaction is N(6)-[(R)-dihydrolipoyl]-L-lysyl-[lipoyl-carrier protein] + a hydroperoxide = N(6)-[(R)-lipoyl]-L-lysyl-[lipoyl-carrier protein] + an alcohol + H2O. Functionally, antioxidant protein with alkyl hydroperoxidase activity. Required for the reduction of the AhpC active site cysteine residues and for the regeneration of the AhpC enzyme activity. This is Alkyl hydroperoxide reductase AhpD from Corynebacterium kroppenstedtii (strain DSM 44385 / JCM 11950 / CIP 105744 / CCUG 35717).